We begin with the raw amino-acid sequence, 175 residues long: ATP synthase subunit b 1 (175 aa).

Residues 26–48 (IINLAIIIGVLYVYGSKFIGNIL) form a helical membrane-spanning segment.

This sequence belongs to the ATPase B chain family. F-type ATPases have 2 components, F(1) - the catalytic core - and F(0) - the membrane proton channel. F(1) has five subunits: alpha(3), beta(3), gamma(1), delta(1), epsilon(1). F(0) has four main subunits: a(1), b(1), b'(1) and c(10-14). The alpha and beta chains form an alternating ring which encloses part of the gamma chain. F(1) is attached to F(0) by a central stalk formed by the gamma and epsilon chains, while a peripheral stalk is formed by the delta, b and b' chains.

Its subcellular location is the cellular thylakoid membrane. F(1)F(0) ATP synthase produces ATP from ADP in the presence of a proton or sodium gradient. F-type ATPases consist of two structural domains, F(1) containing the extramembraneous catalytic core and F(0) containing the membrane proton channel, linked together by a central stalk and a peripheral stalk. During catalysis, ATP synthesis in the catalytic domain of F(1) is coupled via a rotary mechanism of the central stalk subunits to proton translocation. In terms of biological role, component of the F(0) channel, it forms part of the peripheral stalk, linking F(1) to F(0). This is ATP synthase subunit b 1 from Picosynechococcus sp. (strain ATCC 27264 / PCC 7002 / PR-6) (Agmenellum quadruplicatum).